A 229-amino-acid chain; its full sequence is 7-cyano-7-deazaguanine synthase (229 aa).

Residue 9–19 (LSGGLDSTTVL) coordinates ATP. 4 residues coordinate Zn(2+): Cys-192, Cys-202, Cys-205, and Cys-208.

The protein belongs to the QueC family. The cofactor is Zn(2+).

The enzyme catalyses 7-carboxy-7-deazaguanine + NH4(+) + ATP = 7-cyano-7-deazaguanine + ADP + phosphate + H2O + H(+). Its pathway is purine metabolism; 7-cyano-7-deazaguanine biosynthesis. Functionally, catalyzes the ATP-dependent conversion of 7-carboxy-7-deazaguanine (CDG) to 7-cyano-7-deazaguanine (preQ(0)). This Kineococcus radiotolerans (strain ATCC BAA-149 / DSM 14245 / SRS30216) protein is 7-cyano-7-deazaguanine synthase.